A 470-amino-acid chain; its full sequence is Cannabinoid receptor type 1B (470 aa).

Over 1 to 113 the chain is Extracellular; sequence MKLALHRIAG…CFMILTPAQQ (113 aa). 2 N-linked (GlcNAc...) asparagine glycosylation sites follow: N78 and N86. Residues 114-139 traverse the membrane as a helical segment; sequence LVIVILAITLGTFTVLENFVVLCVIL. The Cytoplasmic portion of the chain corresponds to 140-151; sequence HSHTLRSRPSYH. A helical membrane pass occupies residues 152–172; that stretch reads FIGSLAVADLIGSIIFVYSFL. The Extracellular portion of the chain corresponds to 173 to 184; that stretch reads DFHVLHRKDSPS. A helical transmembrane segment spans residues 185 to 209; the sequence is IFLFKLAGVIASFTASVGSLFLTAI. Residues 210–229 are Cytoplasmic-facing; that stretch reads DRYVSIHRPMAYKRIITKTK. A helical transmembrane segment spans residues 230–252; it reads AVIAFSVMWAISIEFSLLPLLGW. The Extracellular portion of the chain corresponds to 253–270; it reads NCKRLHSVCSDIFPLIDE. The chain crosses the membrane as a helical span at residues 271-296; it reads KYLMFWIGMTTVLLLFIIYAYMFILW. Over 297–341 the chain is Cytoplasmic; that stretch reads KSHHHAVRMLSRSSQRSIIVYTSEGTKVQTVRPEQARMDLRLAKT. A helical transmembrane segment spans residues 342–362; sequence LVLILVALIICWGPLLAIMVY. At 363 to 374 the chain is on the extracellular side; the sequence is DLFGRVNDFIKT. The chain crosses the membrane as a helical span at residues 375-396; sequence VFAFCSMLCLLNSTINPVIYAM. Topologically, residues 397–470 are cytoplasmic; it reads RSKDLRRAFV…VTASSPAEAV (74 aa). C412 is lipidated: S-palmitoyl cysteine. A compositionally biased stretch (polar residues) spans 418–434; sequence SLDSSAESDWNSRSVRS. The disordered stretch occupies residues 418-450; that stretch reads SLDSSAESDWNSRSVRSTGGRAGKDRSVGGKPQ.

The protein belongs to the G-protein coupled receptor 1 family. In terms of processing, palmitoylation at Cys-412 is important for recruitment at both plasma membrane and lipid rafts and association with G protein alpha subunits.

The protein resides in the cell membrane. Its subcellular location is the mitochondrion outer membrane. It localises to the cell projection. It is found in the axon. The protein localises to the presynapse. G-protein coupled receptor for cannabinoids. Mediates many cannabinoid-induced effects in the central nervous system (CNS), as well as in peripheral tissues. Regulates cellular respiration and energy production in response to cannabinoids. Signaling typically involves reduction in cyclic AMP. This Takifugu rubripes (Japanese pufferfish) protein is Cannabinoid receptor type 1B (cnr1b).